The primary structure comprises 151 residues: Globin CTT-IIIA (151 aa).

The Globin domain maps to 8 to 147 (SMTDAQVAAV…MFHVIFNALD (140 aa)). H98 serves as a coordination point for heme b.

This sequence belongs to the globin family. As to quaternary structure, monomer.

In Chironomus thummi thummi (Midge), this protein is Globin CTT-IIIA.